The sequence spans 444 residues: Glutamyl-tRNA reductase (444 aa).

Residues 49 to 52 (TCNR), S109, 114 to 116 (ETQ), and Q120 each bind substrate. Residue C50 is the Nucleophile of the active site. Position 189–194 (189–194 (GAGKMG)) interacts with NADP(+).

This sequence belongs to the glutamyl-tRNA reductase family. In terms of assembly, homodimer.

It carries out the reaction (S)-4-amino-5-oxopentanoate + tRNA(Glu) + NADP(+) = L-glutamyl-tRNA(Glu) + NADPH + H(+). It participates in porphyrin-containing compound metabolism; protoporphyrin-IX biosynthesis; 5-aminolevulinate from L-glutamyl-tRNA(Glu): step 1/2. Functionally, catalyzes the NADPH-dependent reduction of glutamyl-tRNA(Glu) to glutamate 1-semialdehyde (GSA). This is Glutamyl-tRNA reductase from Bacillus cereus (strain ATCC 10987 / NRS 248).